A 133-amino-acid polypeptide reads, in one-letter code: Large ribosomal subunit protein bL12 (133 aa).

The interval aspartate 98–aspartate 118 is disordered.

It belongs to the bacterial ribosomal protein bL12 family. In terms of assembly, homodimer. Part of the ribosomal stalk of the 50S ribosomal subunit. Forms a multimeric L10(L12)X complex, where L10 forms an elongated spine to which 2 to 4 L12 dimers bind in a sequential fashion. Binds GTP-bound translation factors.

Its function is as follows. Forms part of the ribosomal stalk which helps the ribosome interact with GTP-bound translation factors. Is thus essential for accurate translation. This chain is Large ribosomal subunit protein bL12, found in Crocosphaera subtropica (strain ATCC 51142 / BH68) (Cyanothece sp. (strain ATCC 51142)).